The chain runs to 950 residues: Translation initiation factor IF-2 (950 aa).

Composition is skewed to basic and acidic residues over residues 128–158 (KPKV…EAKA), 165–186 (AEVK…EKKK), 200–234 (KRAE…DNRR), and 291–312 (NRRD…DGNR). The disordered stretch occupies residues 128–354 (KPKVAEPVKK…NNQSSSVPAT (227 aa)). Polar residues-rich tracts occupy residues 322-336 (NRNQ…NWNQ) and 343-353 (YQNNQSSSVPA). The tr-type G domain maps to 448–619 (ERPAVVTIMG…LLVAEVQELK (172 aa)). Residues 457 to 464 (GHVDHGKT) are G1. Residue 457 to 464 (GHVDHGKT) coordinates GTP. Positions 482–486 (GITQH) are G2. The G3 stretch occupies residues 503–506 (DTPG). GTP is bound by residues 503–507 (DTPGH) and 557–560 (NKID). Residues 557–560 (NKID) form a G4 region. The interval 595–597 (SAK) is G5.

This sequence belongs to the TRAFAC class translation factor GTPase superfamily. Classic translation factor GTPase family. IF-2 subfamily.

It is found in the cytoplasm. Its function is as follows. One of the essential components for the initiation of protein synthesis. Protects formylmethionyl-tRNA from spontaneous hydrolysis and promotes its binding to the 30S ribosomal subunits. Also involved in the hydrolysis of GTP during the formation of the 70S ribosomal complex. The polypeptide is Translation initiation factor IF-2 (Lactococcus lactis subsp. cremoris (strain MG1363)).